The following is a 301-amino-acid chain: MLHHKFVYPFLFKWHLSCVEKCPPQITFIAKYATANDKNGNRKLTIRDEQWPELADPTPYDIFGIPKAGSGNPKLDKKSLKKKYHRYVKLYHPDHSDNIQIFSSEKVTNSDSKSPLLLTSSEKLHRFKVISQAYDILCDPKKKIVYDTTRQGWTTSYSPRSNVNTENYQYAGSYGYHSNAQYEYWNAGTWEDANSMKNERIQENINPWTVIGIICGLAICIEGTALLAKIQESLSKAEFTHDESGLHLIQSYTNYGLDTDKFSRLRRFLWFRTWGLYKSKEDLDREAKINEEMIRKLKAAK.

Residues 58–150 (TPYDIFGIPK…KKKIVYDTTR (93 aa)) enclose the J domain. A helical membrane pass occupies residues 208-228 (WTVIGIICGLAICIEGTALLA).

This sequence belongs to the DnaJ family.

It localises to the mitochondrion membrane. In terms of biological role, probable chaperone. The chain is J domain-containing protein 1 (JID1) from Saccharomyces cerevisiae (strain ATCC 204508 / S288c) (Baker's yeast).